A 215-amino-acid chain; its full sequence is Probable phosphoglycerate mutase GpmB (215 aa).

Residues 8 to 15 (RHGETVWN), 21 to 22 (QG), Arg-58, 82 to 85 (ELNM), and 151 to 152 (GM) each bind substrate. The Tele-phosphohistidine intermediate role is filled by His-9. The Proton donor/acceptor role is filled by Glu-82.

It belongs to the phosphoglycerate mutase family. GpmB subfamily.

It carries out the reaction (2R)-2-phosphoglycerate = (2R)-3-phosphoglycerate. It participates in carbohydrate degradation; glycolysis; pyruvate from D-glyceraldehyde 3-phosphate: step 3/5. In Yersinia enterocolitica serotype O:8 / biotype 1B (strain NCTC 13174 / 8081), this protein is Probable phosphoglycerate mutase GpmB.